The following is a 266-amino-acid chain: GATA zinc finger domain-containing protein 1 (266 aa).

Residues 9–33 (CSMCKTTSSSMWKKSPQGEILCHHC) form a GATA-type zinc finger. Residues 59 to 72 (TTTFATTSAGPSQS) show a composition bias toward low complexity. Residues 59–112 (TTTFATTSAGPSQSNGGGGGKQSKQEIHRRSARLRNTKYKSAPAAEKKVSTKGK) are disordered. Lysine 259 participates in a covalent cross-link: Glycyl lysine isopeptide (Lys-Gly) (interchain with G-Cter in SUMO2).

As to quaternary structure, component of a chromatin complex, at least composed of KDM5A, GATAD1 and EMSY. As to expression, expressed in the eye (lens, ciliary body, retina, sclera and conjunctiva) at postnatal day 2 and 10. Not detected anywhere at postnatal day 14.

The protein resides in the nucleus. Component of some chromatin complex recruited to chromatin sites methylated 'Lys-4' of histone H3 (H3K4me), with a preference for trimethylated form (H3K4me3). The sequence is that of GATA zinc finger domain-containing protein 1 (Gatad1) from Mus musculus (Mouse).